The following is a 550-amino-acid chain: Hydroxylamine reductase (550 aa).

Positions 3, 6, 18, and 25 each coordinate [2Fe-2S] cluster. Residues histidine 249, glutamate 273, cysteine 317, cysteine 405, cysteine 433, cysteine 458, glutamate 492, and lysine 494 each contribute to the hybrid [4Fe-2O-2S] cluster site. Cysteine 405 is modified (cysteine persulfide).

Belongs to the HCP family. It depends on [2Fe-2S] cluster as a cofactor. Hybrid [4Fe-2O-2S] cluster is required as a cofactor.

It localises to the cytoplasm. The catalysed reaction is A + NH4(+) + H2O = hydroxylamine + AH2 + H(+). Functionally, catalyzes the reduction of hydroxylamine to form NH(3) and H(2)O. The chain is Hydroxylamine reductase from Escherichia fergusonii (strain ATCC 35469 / DSM 13698 / CCUG 18766 / IAM 14443 / JCM 21226 / LMG 7866 / NBRC 102419 / NCTC 12128 / CDC 0568-73).